We begin with the raw amino-acid sequence, 1072 residues long: DNA-directed RNA polymerase subunit beta (1072 aa).

The protein belongs to the RNA polymerase beta chain family. In plastids the minimal PEP RNA polymerase catalytic core is composed of four subunits: alpha, beta, beta', and beta''. When a (nuclear-encoded) sigma factor is associated with the core the holoenzyme is formed, which can initiate transcription.

It is found in the plastid. The protein localises to the chloroplast. The enzyme catalyses RNA(n) + a ribonucleoside 5'-triphosphate = RNA(n+1) + diphosphate. Functionally, DNA-dependent RNA polymerase catalyzes the transcription of DNA into RNA using the four ribonucleoside triphosphates as substrates. The protein is DNA-directed RNA polymerase subunit beta of Lemna minor (Common duckweed).